The primary structure comprises 62 residues: Large ribosomal subunit protein eL24 (62 aa).

Zn(2+) contacts are provided by Cys7, Cys10, Cys33, and Cys37. The C4-type zinc-finger motif lies at 7–37; the sequence is CDYCGDDIEPGTGTMFVHNDGSTVHFCSAKC.

It belongs to the eukaryotic ribosomal protein eL24 family. In terms of assembly, part of the 50S ribosomal subunit. Forms a cluster with proteins L3 and L14. Requires Zn(2+) as cofactor.

Its function is as follows. Binds to the 23S rRNA. This chain is Large ribosomal subunit protein eL24, found in Halobacterium salinarum (strain ATCC 29341 / DSM 671 / R1).